The chain runs to 212 residues: 3-isopropylmalate dehydratase small subunit (212 aa).

The protein belongs to the LeuD family. LeuD type 1 subfamily. As to quaternary structure, heterodimer of LeuC and LeuD.

It carries out the reaction (2R,3S)-3-isopropylmalate = (2S)-2-isopropylmalate. The protein operates within amino-acid biosynthesis; L-leucine biosynthesis; L-leucine from 3-methyl-2-oxobutanoate: step 2/4. In terms of biological role, catalyzes the isomerization between 2-isopropylmalate and 3-isopropylmalate, via the formation of 2-isopropylmaleate. This chain is 3-isopropylmalate dehydratase small subunit, found in Pseudomonas aeruginosa (strain LESB58).